A 184-amino-acid chain; its full sequence is ATP synthase subunit b (184 aa).

The helical transmembrane segment at 19–39 threads the bilayer; it reads IIVGVILVLLLTWLIAKAVVP.

The protein belongs to the ATPase B chain family. F-type ATPases have 2 components, F(1) - the catalytic core - and F(0) - the membrane proton channel. F(1) has five subunits: alpha(3), beta(3), gamma(1), delta(1), epsilon(1). F(0) has three main subunits: a(1), b(2) and c(10-14). The alpha and beta chains form an alternating ring which encloses part of the gamma chain. F(1) is attached to F(0) by a central stalk formed by the gamma and epsilon chains, while a peripheral stalk is formed by the delta and b chains.

The protein resides in the cell membrane. In terms of biological role, f(1)F(0) ATP synthase produces ATP from ADP in the presence of a proton or sodium gradient. F-type ATPases consist of two structural domains, F(1) containing the extramembraneous catalytic core and F(0) containing the membrane proton channel, linked together by a central stalk and a peripheral stalk. During catalysis, ATP synthesis in the catalytic domain of F(1) is coupled via a rotary mechanism of the central stalk subunits to proton translocation. Its function is as follows. Component of the F(0) channel, it forms part of the peripheral stalk, linking F(1) to F(0). The chain is ATP synthase subunit b from Cutibacterium acnes (strain DSM 16379 / KPA171202) (Propionibacterium acnes).